A 157-amino-acid polypeptide reads, in one-letter code: Protein Smg (157 aa).

The protein belongs to the Smg family.

This chain is Protein Smg, found in Pectobacterium atrosepticum (strain SCRI 1043 / ATCC BAA-672) (Erwinia carotovora subsp. atroseptica).